A 721-amino-acid polypeptide reads, in one-letter code: Phosphoribosylformylglycinamidine synthase subunit PurL (721 aa).

His47 is an active-site residue. ATP-binding residues include Tyr50 and Lys89. A Mg(2+)-binding site is contributed by Glu91. Substrate contacts are provided by residues 92–95 and Arg114; that span reads SHNH. His93 serves as the catalytic Proton acceptor. Residue Asp115 participates in Mg(2+) binding. Gln238 lines the substrate pocket. Asp266 contacts Mg(2+). Substrate is bound at residue 310–312; the sequence is ESQ. 2 residues coordinate ATP: Asp490 and Gly527. Asn528 provides a ligand contact to Mg(2+). Residue Ser530 participates in substrate binding.

It belongs to the FGAMS family. As to quaternary structure, monomer. Part of the FGAM synthase complex composed of 1 PurL, 1 PurQ and 2 PurS subunits.

It is found in the cytoplasm. It catalyses the reaction N(2)-formyl-N(1)-(5-phospho-beta-D-ribosyl)glycinamide + L-glutamine + ATP + H2O = 2-formamido-N(1)-(5-O-phospho-beta-D-ribosyl)acetamidine + L-glutamate + ADP + phosphate + H(+). Its pathway is purine metabolism; IMP biosynthesis via de novo pathway; 5-amino-1-(5-phospho-D-ribosyl)imidazole from N(2)-formyl-N(1)-(5-phospho-D-ribosyl)glycinamide: step 1/2. Part of the phosphoribosylformylglycinamidine synthase complex involved in the purines biosynthetic pathway. Catalyzes the ATP-dependent conversion of formylglycinamide ribonucleotide (FGAR) and glutamine to yield formylglycinamidine ribonucleotide (FGAM) and glutamate. The FGAM synthase complex is composed of three subunits. PurQ produces an ammonia molecule by converting glutamine to glutamate. PurL transfers the ammonia molecule to FGAR to form FGAM in an ATP-dependent manner. PurS interacts with PurQ and PurL and is thought to assist in the transfer of the ammonia molecule from PurQ to PurL. This chain is Phosphoribosylformylglycinamidine synthase subunit PurL, found in Ruegeria sp. (strain TM1040) (Silicibacter sp.).